Here is a 366-residue protein sequence, read N- to C-terminus: Transmembrane protein 26 (366 aa).

3 consecutive transmembrane segments (helical) span residues 4 to 24, 36 to 56, and 64 to 84; these read LVLL…LVAV, YWLL…TLKF, and WLSP…WLLE. N110 carries an N-linked (GlcNAc...) asparagine glycan. The next 5 membrane-spanning stretches (helical) occupy residues 138 to 158, 176 to 196, 208 to 228, 258 to 278, and 282 to 302; these read MVCE…ILII, ELLL…TETL, VSGI…DLAV, IGLS…VLMI, and VINH…ALHF. Positions 319-329 are enriched in basic and acidic residues; it reads HPESPKPEHSG. The tract at residues 319-366 is disordered; the sequence is HPESPKPEHSGPDQPSESGPSEWEDASPEALPLRTSPVTSEESYPTTP. Over residues 354-366 the composition is skewed to polar residues; sequence SPVTSEESYPTTP.

Its subcellular location is the membrane. The protein is Transmembrane protein 26 (Tmem26) of Mus musculus (Mouse).